Reading from the N-terminus, the 218-residue chain is 3-dehydroquinate dehydratase (218 aa).

Residues 29 to 31 and Arg-56 each bind 3-dehydroquinate; that span reads EFR. His-116 (proton donor/acceptor) is an active-site residue. Residue Lys-142 is the Schiff-base intermediate with substrate of the active site. 3-dehydroquinate contacts are provided by Arg-180, Ser-200, and Gln-204.

Belongs to the type-I 3-dehydroquinase family. In terms of assembly, homodimer.

The enzyme catalyses 3-dehydroquinate = 3-dehydroshikimate + H2O. It participates in metabolic intermediate biosynthesis; chorismate biosynthesis; chorismate from D-erythrose 4-phosphate and phosphoenolpyruvate: step 3/7. Its function is as follows. Involved in the third step of the chorismate pathway, which leads to the biosynthesis of aromatic amino acids. Catalyzes the cis-dehydration of 3-dehydroquinate (DHQ) and introduces the first double bond of the aromatic ring to yield 3-dehydroshikimate. The chain is 3-dehydroquinate dehydratase from Methanococcus maripaludis (strain C6 / ATCC BAA-1332).